The primary structure comprises 332 residues: Probable endo-beta-1,4-glucanase B (332 aa).

The N-terminal stretch at 1-18 (MKFQSTLLLAAAAGSALA) is a signal peptide. N-linked (GlcNAc...) asparagine glycans are attached at residues N38 and N100. The active-site Proton donor is E160. N-linked (GlcNAc...) asparagine glycosylation is present at N212. E267 serves as the catalytic Nucleophile. N-linked (GlcNAc...) asparagine glycosylation occurs at N289.

It belongs to the glycosyl hydrolase 5 (cellulase A) family.

It is found in the secreted. It catalyses the reaction Endohydrolysis of (1-&gt;4)-beta-D-glucosidic linkages in cellulose, lichenin and cereal beta-D-glucans.. Its function is as follows. Has endoglucanase activity on substrates containing beta-1,4 glycosidic bonds, like in carboxymethylcellulose (CMC), hydroxyethylcellulose (HEC) and beta-glucan. Involved in the degradation of complex natural cellulosic substrates. The chain is Probable endo-beta-1,4-glucanase B (eglB) from Aspergillus kawachii (strain NBRC 4308) (White koji mold).